We begin with the raw amino-acid sequence, 476 residues long: Homeobox protein invected (476 aa).

3 disordered regions span residues 1-43, 273-331, and 347-381; these read MAAV…SEDI, KTRY…TSGD, and DRPS…AFSG. Residues 23-32 are compositionally biased toward polar residues; sequence SPNTRDTTSP. Composition is skewed to basic and acidic residues over residues 33–43 and 292–305; these read ECHDDEKSEDI and KLDE…KTPD. Residues 318–331 show a composition bias toward low complexity; sequence GSNSGSTSGATSGD. Positions 372–431 form a DNA-binding region, homeobox; that stretch reads EKRPRTAFSGPQLARLKHEFAENRYLTERRRQSLAAELGLAEAQIKIWFQNKRAKIKKAS.

Belongs to the engrailed homeobox family. As to expression, expressed in the middle silk gland but not in the posterior silk gland during the fourth molt/fifth intermolt period.

It localises to the nucleus. Functionally, this protein might be involved in the compartmentalization of the silk gland. This chain is Homeobox protein invected (INV), found in Bombyx mori (Silk moth).